The primary structure comprises 156 residues: Movement protein P17 (156 aa).

Residues 38–54 (AEDAEEEAIAAQEELEF) form a homodimerization region. 2 disordered regions span residues 55–80 (PEDE…EVSP) and 131–156 (AKYH…IKRG). Positions 57–156 (DEAQARHSCL…RAAPKLIKRG (100 aa)) are RNA-binding. Phosphoserine is present on residues serine 71, serine 79, serine 137, and serine 140. Basic residues predominate over residues 144–156 (KLRRAAPKLIKRG).

Belongs to the polerovirus movement protein family. Homodimer. Heterodimer with movement protein P3a. Post-translationally, expressed as a nonphosphorylated 20kDa form and a phosphorylated 22kDa form. Phosphorylated by a host PKC-related kinase. Serine phosphorylation is required for plamodesma targeting.

The protein resides in the host cell junction. It is found in the host plasmodesma. The protein localises to the host mitochondrion outer membrane. Its subcellular location is the host Golgi apparatus. It localises to the host chloroplast envelope. In terms of biological role, together with movement protein P3a, facilitates long-distance movement of virions in host. Transports viral genome to neighboring plant cells directly through plasmosdesmata, without any budding. The movement protein allows efficient cell to cell propagation, by bypassing the host cell wall barrier. Binds ssRNA. This is Movement protein P17 from Solanum tuberosum (Potato).